A 108-amino-acid chain; its full sequence is Evasin P1156 (108 aa).

Residues 1–28 form the signal peptide; that stretch reads MEVKTYAFLQIAVFIFLGMQIFASLTDA. 3 cysteine pairs are disulfide-bonded: Cys-41-Cys-63, Cys-45-Cys-65, and Cys-56-Cys-76. Asn-44 carries N-linked (GlcNAc...) asparagine glycosylation. The interval 89–108 is disordered; the sequence is NPSDSEIEAAKPKRSDTLSH. Over residues 96-108 the composition is skewed to basic and acidic residues; sequence EAAKPKRSDTLSH.

It is found in the secreted. Functionally, salivary chemokine-binding protein which has chemokine-neutralizing activity and binds to host chemokines CXCL1, CXCL2, CXCL3, CXCL5, CXCL6 and CXCL8. This Ixodes ricinus (Common tick) protein is Evasin P1156.